We begin with the raw amino-acid sequence, 449 residues long: 3-phosphoshikimate 1-carboxyvinyltransferase (449 aa).

The interval 1–26 (MNHHLPSRPARSRQSQGLKGNLRVPG) is disordered. Residues lysine 28, serine 29, and arginine 33 each coordinate 3-phosphoshikimate. Lysine 28 contributes to the phosphoenolpyruvate binding site. Phosphoenolpyruvate is bound by residues glycine 100 and arginine 128. 3-phosphoshikimate-binding residues include serine 174, glutamine 176, aspartate 327, and lysine 354. Glutamine 176 contacts phosphoenolpyruvate. Residue aspartate 327 is the Proton acceptor of the active site. Residues arginine 358 and arginine 403 each contribute to the phosphoenolpyruvate site.

Belongs to the EPSP synthase family. As to quaternary structure, monomer.

Its subcellular location is the cytoplasm. The enzyme catalyses 3-phosphoshikimate + phosphoenolpyruvate = 5-O-(1-carboxyvinyl)-3-phosphoshikimate + phosphate. The protein operates within metabolic intermediate biosynthesis; chorismate biosynthesis; chorismate from D-erythrose 4-phosphate and phosphoenolpyruvate: step 6/7. Functionally, catalyzes the transfer of the enolpyruvyl moiety of phosphoenolpyruvate (PEP) to the 5-hydroxyl of shikimate-3-phosphate (S3P) to produce enolpyruvyl shikimate-3-phosphate and inorganic phosphate. The chain is 3-phosphoshikimate 1-carboxyvinyltransferase from Chelativorans sp. (strain BNC1).